A 545-amino-acid polypeptide reads, in one-letter code: Vicilin Pis v 3.0101 (545 aa).

The signal sequence occupies residues 1-25; it reads MGSRTKFCLTLFLVSVLILCAGLAL. 2 disordered regions span residues 62–93 and 129–154; these read KEKK…HEPG and REHS…DENP. Residues 82–93 are compositionally biased toward basic and acidic residues; sequence GRGDEFSTHEPG. The segment covering 136–153 has biased composition (acidic residues); the sequence is DEEEEEEGDEEQEEEDEN. Positions 354–517 constitute a Cupin type-1 2 domain; it reads TFNLFKKDPS…LAFKTKGEEV (164 aa).

It belongs to the 7S seed storage protein family. In terms of tissue distribution, expressed in seed.

Its function is as follows. Seed storage protein. The protein is Vicilin Pis v 3.0101 of Pistacia vera (Pistachio).